Consider the following 310-residue polypeptide: UDP-N-acetylenolpyruvoylglucosamine reductase (310 aa).

The 166-residue stretch at Lys23–Gly188 folds into the FAD-binding PCMH-type domain. The active site involves Arg168. Ser217 (proton donor) is an active-site residue. Glu287 is a catalytic residue.

The protein belongs to the MurB family. The cofactor is FAD.

The protein localises to the cytoplasm. The enzyme catalyses UDP-N-acetyl-alpha-D-muramate + NADP(+) = UDP-N-acetyl-3-O-(1-carboxyvinyl)-alpha-D-glucosamine + NADPH + H(+). It functions in the pathway cell wall biogenesis; peptidoglycan biosynthesis. Cell wall formation. The protein is UDP-N-acetylenolpyruvoylglucosamine reductase of Rickettsia bellii (strain OSU 85-389).